Reading from the N-terminus, the 289-residue chain is Ribosomal RNA small subunit methyltransferase I (289 aa).

Belongs to the methyltransferase superfamily. RsmI family.

It localises to the cytoplasm. It carries out the reaction cytidine(1402) in 16S rRNA + S-adenosyl-L-methionine = 2'-O-methylcytidine(1402) in 16S rRNA + S-adenosyl-L-homocysteine + H(+). Functionally, catalyzes the 2'-O-methylation of the ribose of cytidine 1402 (C1402) in 16S rRNA. In Helicobacter pylori (strain J99 / ATCC 700824) (Campylobacter pylori J99), this protein is Ribosomal RNA small subunit methyltransferase I.